Here is an 81-residue protein sequence, read N- to C-terminus: U6-theraphotoxin-Hs1a (81 aa).

The N-terminal stretch at 1-21 is a signal peptide; that stretch reads MKASMFLALAGLVLLFVVCYA. The propeptide occupies 22–48; it reads SESEEKEFPRELLSTIFAVDDFKGEER. 2 cysteine pairs are disulfide-bonded: Cys-50–Cys-65 and Cys-57–Cys-70.

This sequence belongs to the neurotoxin 10 (Hwtx-1) family. 51 (Hntx-8) subfamily. Expressed by the venom gland.

Its subcellular location is the secreted. In terms of biological role, binds to the nicotinic acetylcholine receptor. Blocks neuromuscular transmission. The chain is U6-theraphotoxin-Hs1a from Cyriopagopus schmidti (Chinese bird spider).